The following is a 442-amino-acid chain: UDP-N-acetylmuramate--L-alanine ligase (442 aa).

Position 110-116 (110-116 (GAHGKTS)) interacts with ATP.

Belongs to the MurCDEF family.

Its subcellular location is the cytoplasm. It carries out the reaction UDP-N-acetyl-alpha-D-muramate + L-alanine + ATP = UDP-N-acetyl-alpha-D-muramoyl-L-alanine + ADP + phosphate + H(+). It functions in the pathway cell wall biogenesis; peptidoglycan biosynthesis. Its function is as follows. Cell wall formation. The protein is UDP-N-acetylmuramate--L-alanine ligase of Streptococcus thermophilus (strain ATCC BAA-491 / LMD-9).